A 401-amino-acid chain; its full sequence is Phosphoglycerate kinase (401 aa).

Substrate-binding positions include 24–26, arginine 40, 63–66, arginine 122, and arginine 155; these read DFN and HFGR. Residues lysine 206, glycine 297, glutamate 328, and 357-360 contribute to the ATP site; that span reads GGDS.

This sequence belongs to the phosphoglycerate kinase family. Monomer.

Its subcellular location is the cytoplasm. The catalysed reaction is (2R)-3-phosphoglycerate + ATP = (2R)-3-phospho-glyceroyl phosphate + ADP. It functions in the pathway carbohydrate degradation; glycolysis; pyruvate from D-glyceraldehyde 3-phosphate: step 2/5. In Acaryochloris marina (strain MBIC 11017), this protein is Phosphoglycerate kinase.